Here is a 603-residue protein sequence, read N- to C-terminus: Adenine deaminase 1 (603 aa).

Belongs to the metallo-dependent hydrolases superfamily. Adenine deaminase family. Requires Mn(2+) as cofactor.

The catalysed reaction is adenine + H2O + H(+) = hypoxanthine + NH4(+). The sequence is that of Adenine deaminase 1 from Carboxydothermus hydrogenoformans (strain ATCC BAA-161 / DSM 6008 / Z-2901).